The sequence spans 141 residues: Transcriptional regulator MraZ (141 aa).

SpoVT-AbrB domains follow at residues 5 to 47 (EFEH…PAER) and 76 to 119 (AAEC…GAEH).

Belongs to the MraZ family. Forms oligomers.

The protein resides in the cytoplasm. It is found in the nucleoid. This is Transcriptional regulator MraZ from Lactiplantibacillus plantarum (strain ATCC BAA-793 / NCIMB 8826 / WCFS1) (Lactobacillus plantarum).